The primary structure comprises 345 residues: Phosphate acyltransferase (345 aa).

It belongs to the PlsX family. Homodimer. Probably interacts with PlsY.

It localises to the cytoplasm. The catalysed reaction is a fatty acyl-[ACP] + phosphate = an acyl phosphate + holo-[ACP]. The protein operates within lipid metabolism; phospholipid metabolism. Its function is as follows. Catalyzes the reversible formation of acyl-phosphate (acyl-PO(4)) from acyl-[acyl-carrier-protein] (acyl-ACP). This enzyme utilizes acyl-ACP as fatty acyl donor, but not acyl-CoA. The chain is Phosphate acyltransferase from Wolbachia pipientis wMel.